Here is a 393-residue protein sequence, read N- to C-terminus: Serine/threonine-protein phosphatase 2A activator 1 (393 aa).

The interval 328–393 (EKEEESIEQA…TSFSRDRLRR (66 aa)) is disordered. Polar residues-rich tracts occupy residues 335–356 (EQAN…TSTS) and 365–386 (SGNN…QTSF). The residue at position 341 (serine 341) is a Phosphoserine.

The protein belongs to the PTPA-type PPIase family. In terms of assembly, interacts with the phosphatase PP2A-like catalytic subunits PPG1, PPH3 and SIT4. Forms a ternary complex with SIT4-TAP42.

It is found in the cytoplasm. The protein localises to the nucleus. The catalysed reaction is [protein]-peptidylproline (omega=180) = [protein]-peptidylproline (omega=0). PPIases accelerate the folding of proteins. It catalyzes the cis-trans isomerization of proline imidic peptide bonds in oligopeptides. Acts as a regulatory subunit for TAP42-associated PP2A-like phosphatases modulating their activity or substrate specificity, probably by inducing a conformational change in the catalytic subunit, a direct target of the PPIase. Can reactivate inactive phosphatase PP2A-phosphatase methylesterase complexes (PP2Ai) in presence of ATP and Mg(2+) by dissociating the inactive form from the complex. Involved in the regulation of cell cycle progression, mitotic spindle formation, bud morphogenesis and DNA repair. This Saccharomyces cerevisiae (strain ATCC 204508 / S288c) (Baker's yeast) protein is Serine/threonine-protein phosphatase 2A activator 1 (RRD1).